The following is a 152-amino-acid chain: Large ribosomal subunit protein uL15 (152 aa).

It belongs to the universal ribosomal protein uL15 family. Part of the 50S ribosomal subunit.

Its function is as follows. Binds to the 23S rRNA. This is Large ribosomal subunit protein uL15 from Staphylothermus marinus (strain ATCC 43588 / DSM 3639 / JCM 9404 / F1).